The sequence spans 184 residues: Protein PLANT CADMIUM RESISTANCE 5 (184 aa).

A compositionally biased stretch (polar residues) spans methionine 1–serine 26. The disordered stretch occupies residues methionine 1–lysine 33. The chain crosses the membrane as a helical span at residues alanine 94–phenylalanine 114.

It belongs to the cornifelin family.

Its subcellular location is the membrane. May be involved in heavy metals transport. This chain is Protein PLANT CADMIUM RESISTANCE 5 (PCR5), found in Arabidopsis thaliana (Mouse-ear cress).